The sequence spans 169 residues: Large ribosomal subunit protein uL5 (169 aa).

This sequence belongs to the universal ribosomal protein uL5 family. In terms of assembly, part of the 50S ribosomal subunit; contacts the 5S rRNA and probably tRNA. Forms a bridge to the 30S subunit in the 70S ribosome.

In terms of biological role, this is one of the proteins that bind and probably mediate the attachment of the 5S RNA into the large ribosomal subunit, where it forms part of the central protuberance. In the 70S ribosome it contacts protein S13 of the 30S subunit (bridge B1b), connecting the 2 subunits; this bridge is implicated in subunit movement. May contact the P site tRNA; the 5S rRNA and some of its associated proteins might help stabilize positioning of ribosome-bound tRNAs. In Cenarchaeum symbiosum (strain A), this protein is Large ribosomal subunit protein uL5.